The following is a 124-amino-acid chain: Protein RibT (124 aa).

Residues 3–124 (IRYKKSFEKI…QQDQDISYNN (122 aa)) enclose the N-acetyltransferase domain.

Functionally, involved in riboflavin biosynthesis. This chain is Protein RibT (ribT), found in Bacillus subtilis (strain 168).